Reading from the N-terminus, the 400-residue chain is Enoyl-[acyl-carrier-protein] reductase [NADH] (400 aa).

NAD(+)-binding positions include 48 to 53 (GASTGY), 74 to 75 (FE), 111 to 112 (DA), and 139 to 140 (LA). Y225 is a substrate binding site. Catalysis depends on Y235, which acts as the Proton donor. NAD(+)-binding positions include K244 and 273 to 275 (VVT).

The protein belongs to the TER reductase family. In terms of assembly, monomer.

It catalyses the reaction a 2,3-saturated acyl-[ACP] + NAD(+) = a (2E)-enoyl-[ACP] + NADH + H(+). Its pathway is lipid metabolism; fatty acid biosynthesis. Its function is as follows. Involved in the final reduction of the elongation cycle of fatty acid synthesis (FAS II). Catalyzes the reduction of a carbon-carbon double bond in an enoyl moiety that is covalently linked to an acyl carrier protein (ACP). The polypeptide is Enoyl-[acyl-carrier-protein] reductase [NADH] (Burkholderia ambifaria (strain MC40-6)).